A 150-amino-acid polypeptide reads, in one-letter code: 16.6 kDa heat shock protein (150 aa).

The sHSP domain maps to 31 to 150; the sequence is AERCPVLTNV…PQLKAIPISG (120 aa).

It belongs to the small heat shock protein (HSP20) family. In terms of assembly, may form oligomeric structures.

The protein resides in the cytoplasm. The polypeptide is 16.6 kDa heat shock protein (HSP16.6) (Oryza sativa subsp. japonica (Rice)).